The following is a 1420-amino-acid chain: DNA-directed RNA polymerase subunit beta' (1420 aa).

Zn(2+) is bound by residues C70, C72, C85, and C88. Positions 464, 466, and 468 each coordinate Mg(2+). C823, C897, C904, and C907 together coordinate Zn(2+).

The protein belongs to the RNA polymerase beta' chain family. As to quaternary structure, the RNAP catalytic core consists of 2 alpha, 1 beta, 1 beta' and 1 omega subunit. When a sigma factor is associated with the core the holoenzyme is formed, which can initiate transcription. Mg(2+) is required as a cofactor. Zn(2+) serves as cofactor.

It catalyses the reaction RNA(n) + a ribonucleoside 5'-triphosphate = RNA(n+1) + diphosphate. Functionally, DNA-dependent RNA polymerase catalyzes the transcription of DNA into RNA using the four ribonucleoside triphosphates as substrates. This is DNA-directed RNA polymerase subunit beta' from Polynucleobacter necessarius subsp. necessarius (strain STIR1).